Reading from the N-terminus, the 445-residue chain is Protein phosphatase 2C 53 (445 aa).

In terms of domain architecture, PPM-type phosphatase spans 124–435; sequence LWGLESICGR…DNITVVVIDL (312 aa). Positions 180, 181, 362, and 426 each coordinate Mn(2+).

It belongs to the PP2C family. As to quaternary structure, interacts with PYL10, SAPK8 and SAPK10. Binding to PYL10 is dependent on the presence of abscisic acid (ABA). Interacts with PYL3, PYL5, PYL9 and PYL10. Binding to PYL9 and PYL10 is dependent on the presence of ABA. Mg(2+) serves as cofactor. Requires Mn(2+) as cofactor. Expressed in leaf blades, leaf sheaths and lamina joints. Expressed at low levels in roots, stems, flowers and panicles.

The protein localises to the cytoplasm. The protein resides in the cytosol. It localises to the nucleus. It catalyses the reaction O-phospho-L-seryl-[protein] + H2O = L-seryl-[protein] + phosphate. The catalysed reaction is O-phospho-L-threonyl-[protein] + H2O = L-threonyl-[protein] + phosphate. Its activity is regulated as follows. Repressed by abscisic acid-bound PYL1. Its function is as follows. Protein phosphatase that acts as a negative regulator of abscisic acid (ABA) signaling. Involved in the regulation of root architecture development and drought resistance. Can dephosphorylate SAPK8 and SAPK10 in vitro. Together with PYL10, SAPK8 and SAPK10, may form an ABA signaling module involved in stress response. This chain is Protein phosphatase 2C 53, found in Oryza sativa subsp. japonica (Rice).